The primary structure comprises 774 residues: Lysyl oxidase homolog 2 (774 aa).

A signal peptide spans 1-25; that stretch reads MERPLCSHLCSCLAVLALLSPLSLA. 4 consecutive SRCR domains span residues 58-159, 188-302, 326-425, and 435-544; these read LRLA…VVCS, IRAI…VSCV, VRLR…VRCN, and LRLN…VACS. Intrachain disulfides connect C84–C148, C97–C158, C128–C138, C218–C291, C231–C301, C265–C275, C351–C414, C364–C424, and C395–C405. A glycan (N-linked (GlcNAc...) asparagine) is linked at N288. N-linked (GlcNAc...) asparagine glycosylation is present at N455. Intrachain disulfides connect C464-C530, C477-C543, and C511-C521. The tract at residues 548–751 is lysyl-oxidase like; the sequence is PDLVLNAEMV…WMYNCHIGGS (204 aa). Positions 549 and 550 each coordinate Ca(2+). 4 disulfides stabilise this stretch: C573-C625, C579-C695, C657-C673, and C663-C685. Cu cation-binding residues include H626, H628, and H630. N-linked (GlcNAc...) asparagine glycosylation occurs at N644. The lysine tyrosylquinone (Lys-Tyr) cross-link spans 653–689; that stretch reads KASFCLEDTECEGDIQKNYECANFGDQGITMGCWDMY. The residue at position 689 (Y689) is a 2',4',5'-topaquinone. Ca(2+)-binding residues include E722, D724, N727, and N728. C732 and C746 form a disulfide bridge.

This sequence belongs to the lysyl oxidase family. Component of some chromatin repressor complex. Interacts with SNAI1. Interacts with TAF10. Interacts with HSPA5. Interacts with EFEMP2. Requires Cu cation as cofactor. Lysine tyrosylquinone residue is required as a cofactor. In terms of processing, the lysine tyrosylquinone cross-link (LTQ) is generated by condensation of the epsilon-amino group of a lysine with a topaquinone produced by oxidation of tyrosine. N-glycosylated. N-glycosylation on Asn-455 and Asn-644 may be essential for proper folding and secretion; may be composed of a fucosylated carbohydrates attached to a trimannose N-linked glycan core.

Its subcellular location is the secreted. The protein resides in the extracellular space. It is found in the extracellular matrix. The protein localises to the basement membrane. It localises to the nucleus. Its subcellular location is the chromosome. The protein resides in the endoplasmic reticulum. It carries out the reaction L-lysyl-[protein] + O2 + H2O = (S)-2-amino-6-oxohexanoyl-[protein] + H2O2 + NH4(+). Specifically inhibited by a mouse monoclonal antibody AB0023, inhibition occurs in a non-competitive manner. Mediates the post-translational oxidative deamination of lysine residues on target proteins leading to the formation of deaminated lysine (allysine). Acts as a transcription corepressor and specifically mediates deamination of trimethylated 'Lys-4' of histone H3 (H3K4me3), a specific tag for epigenetic transcriptional activation. Shows no activity against histone H3 when it is trimethylated on 'Lys-9' (H3K9me3) or 'Lys-27' (H3K27me3) or when 'Lys-4' is monomethylated (H3K4me1) or dimethylated (H3K4me2). Also mediates deamination of methylated TAF10, a member of the transcription factor IID (TFIID) complex, which induces release of TAF10 from promoters, leading to inhibition of TFIID-dependent transcription. LOXL2-mediated deamination of TAF10 results in transcriptional repression of genes required for embryonic stem cell pluripotency including POU5F1/OCT4, NANOG, KLF4 and SOX2. Involved in epithelial to mesenchymal transition (EMT) via interaction with SNAI1 and participates in repression of E-cadherin CDH1, probably by mediating deamination of histone H3. During EMT, involved with SNAI1 in negatively regulating pericentromeric heterochromatin transcription. SNAI1 recruits LOXL2 to pericentromeric regions to oxidize histone H3 and repress transcription which leads to release of heterochromatin component CBX5/HP1A, enabling chromatin reorganization and acquisition of mesenchymal traits. Interacts with the endoplasmic reticulum protein HSPA5 which activates the IRE1-XBP1 pathway of the unfolded protein response, leading to expression of several transcription factors involved in EMT and subsequent EMT induction. When secreted into the extracellular matrix, promotes cross-linking of extracellular matrix proteins by mediating oxidative deamination of peptidyl lysine residues in precursors to fibrous collagen and elastin. Acts as a regulator of sprouting angiogenesis, probably via collagen IV scaffolding. Acts as a regulator of chondrocyte differentiation, probably by regulating expression of factors that control chondrocyte differentiation. The sequence is that of Lysyl oxidase homolog 2 (LOXL2) from Pongo abelii (Sumatran orangutan).